A 241-amino-acid polypeptide reads, in one-letter code: 3-deoxy-manno-octulosonate cytidylyltransferase (241 aa).

It belongs to the KdsB family.

It is found in the cytoplasm. The enzyme catalyses 3-deoxy-alpha-D-manno-oct-2-ulosonate + CTP = CMP-3-deoxy-beta-D-manno-octulosonate + diphosphate. It participates in nucleotide-sugar biosynthesis; CMP-3-deoxy-D-manno-octulosonate biosynthesis; CMP-3-deoxy-D-manno-octulosonate from 3-deoxy-D-manno-octulosonate and CTP: step 1/1. Its pathway is bacterial outer membrane biogenesis; lipopolysaccharide biosynthesis. Functionally, activates KDO (a required 8-carbon sugar) for incorporation into bacterial lipopolysaccharide in Gram-negative bacteria. The sequence is that of 3-deoxy-manno-octulosonate cytidylyltransferase from Rickettsia typhi (strain ATCC VR-144 / Wilmington).